The sequence spans 450 residues: UPF0236 protein in vanSb 3'region (450 aa).

It belongs to the UPF0236 family.

This Streptococcus gallolyticus (Streptococcus bovis biotype I) protein is UPF0236 protein in vanSb 3'region.